A 122-amino-acid polypeptide reads, in one-letter code: Large ribosomal subunit protein uL14 (122 aa).

It belongs to the universal ribosomal protein uL14 family. Part of the 50S ribosomal subunit. Forms a cluster with proteins L3 and L19. In the 70S ribosome, L14 and L19 interact and together make contacts with the 16S rRNA in bridges B5 and B8.

Its function is as follows. Binds to 23S rRNA. Forms part of two intersubunit bridges in the 70S ribosome. The sequence is that of Large ribosomal subunit protein uL14 from Albidiferax ferrireducens (strain ATCC BAA-621 / DSM 15236 / T118) (Rhodoferax ferrireducens).